A 209-amino-acid chain; its full sequence is rRNA N(6)-adenosine-methyltransferase METTL5 (209 aa).

S-adenosyl-L-methionine-binding positions include Gln28, Thr31, Gly59, Cys62, Val64, Asp81, and 108 to 109 (DV).

Belongs to the methyltransferase superfamily. PrmA family. As to quaternary structure, heterodimer; heterodimerizes with TRMT112. As to expression, ubiquitously expressed in brain.

The protein resides in the nucleus. It is found in the presynapse. It localises to the postsynapse. It carries out the reaction adenosine(1832) in 18S rRNA + S-adenosyl-L-methionine = N(6)-methyladenosine(1832) in 18S rRNA + S-adenosyl-L-homocysteine + H(+). With respect to regulation, rRNA N6-adenosine-methyltransferase activity is inhibited by zinc. Functionally, catalytic subunit of a heterodimer with TRMT112, which specifically methylates the 6th position of adenine in position 1832 of 18S rRNA. N6-methylation of adenine(1832) in 18S rRNA resides in the decoding center of 18S rRNA and is required for translation and embryonic stem cells (ESCs) pluripotency and differentiation. This chain is rRNA N(6)-adenosine-methyltransferase METTL5, found in Mus musculus (Mouse).